Here is a 195-residue protein sequence, read N- to C-terminus: Calcineurin B homologous protein 1 (195 aa).

A lipid anchor (N-myristoyl glycine) is attached at Gly2. 4 consecutive EF-hand domains span residues 26–61 (SQIT…AINP), 66–101 (IINA…KSKD), 110–145 (SRSN…MVGV), and 151–186 (QLGS…VDVE). Ca(2+) contacts are provided by Asp123, Asp125, Asp127, Lys129, Glu134, Asp164, Asp166, Asp168, and Glu175.

This sequence belongs to the calcineurin regulatory subunit family. CHP subfamily. In terms of assembly, monomer. In terms of processing, phosphorylated. Post-translationally, calcium-binding or N-myristoylation are necessary for the Na(+)/H(+) exchange activities.

Its subcellular location is the nucleus. The protein localises to the cytoplasm. It localises to the cytoskeleton. It is found in the endomembrane system. The protein resides in the endoplasmic reticulum-Golgi intermediate compartment. Its subcellular location is the endoplasmic reticulum. The protein localises to the cell membrane. It localises to the membrane. In terms of biological role, calcium-binding protein involved in different processes such as regulation of vesicular trafficking, plasma membrane Na(+)/H(+) exchanger and gene transcription. Involved in the constitutive exocytic membrane traffic. Mediates the association between microtubules and membrane-bound organelles of the endoplasmic reticulum and Golgi apparatus and is also required for the targeting and fusion of transcytotic vesicles (TCV) with the plasma membrane. Functions as an integral cofactor in cell pH regulation by controlling plasma membrane-type Na(+)/H(+) exchange activity. Inhibits serum- and GTPase-stimulated Na(+)/H(+) exchange. Plays a role as an inhibitor of ribosomal RNA transcription. Acts as a negative regulator of the calcineurin/NFAT signaling pathway. In Gallus gallus (Chicken), this protein is Calcineurin B homologous protein 1 (CHP1).